Here is a 283-residue protein sequence, read N- to C-terminus: Lipoyl synthase (283 aa).

7 residues coordinate [4Fe-4S] cluster: C35, C40, C46, C61, C65, C68, and S273. A Radical SAM core domain is found at 47 to 262 (FRERQATFLI…RAAALATGFA (216 aa)).

It belongs to the radical SAM superfamily. Lipoyl synthase family. [4Fe-4S] cluster serves as cofactor.

The protein localises to the cytoplasm. The catalysed reaction is [[Fe-S] cluster scaffold protein carrying a second [4Fe-4S](2+) cluster] + N(6)-octanoyl-L-lysyl-[protein] + 2 oxidized [2Fe-2S]-[ferredoxin] + 2 S-adenosyl-L-methionine + 4 H(+) = [[Fe-S] cluster scaffold protein] + N(6)-[(R)-dihydrolipoyl]-L-lysyl-[protein] + 4 Fe(3+) + 2 hydrogen sulfide + 2 5'-deoxyadenosine + 2 L-methionine + 2 reduced [2Fe-2S]-[ferredoxin]. It functions in the pathway protein modification; protein lipoylation via endogenous pathway; protein N(6)-(lipoyl)lysine from octanoyl-[acyl-carrier-protein]: step 2/2. Catalyzes the radical-mediated insertion of two sulfur atoms into the C-6 and C-8 positions of the octanoyl moiety bound to the lipoyl domains of lipoate-dependent enzymes, thereby converting the octanoylated domains into lipoylated derivatives. This is Lipoyl synthase from Geobacter metallireducens (strain ATCC 53774 / DSM 7210 / GS-15).